A 1002-amino-acid chain; its full sequence is MSGLSNKRAAGDGGSGPPEKKLNREEKTTTTLIEPIRLGGISSTEEMDSKVLQFKNKKLAERLEQRQACEDELRERIEKLEKRQATDDATLLIVNRYWAQLDETVEALLQCYENQRELSSSGTEVPGCQEGLTRDVIPRTDPGTSDLREPLPMQFRAPLSEPALAFVVALGASSCEEVELQLQGRMEFSKAAVSRVVEASDRLQRQVEELCQRVYSRGDSEAPGEVARARTRELGRENRRLQDLATQLQEKHHRISLEYSELQDKVTSTETKVLEMETTVEDLQWDIEKLRKREQKLNKHLAEALEQLNSGYYVSGSSTGFQGGQITLSMQKFEMLNAELEENQELANSRMAELEKLQAELQGAVRTNERLKVALRSLPEEVVRETGEYRMLQAQFSLLYNESLQVKTQLDEARGLLLASKNSHLRHIEHMESDELGLQKKLRTEVIQLEDTLAQVRKEYEMLRIEFEQNLAANEQAGPINREMRHLISSLQNHNHQLKGDAQRYKRKLREVQAEIGKLRAQASGSSHCGPNLSHPDDSGLNALAPGKEDSGPGPGGTPDSKKELALVAGATSVASSVKKEELVSSEDDAQALAPGTQGLPSRGREPEARPKRELREREGPSLGPPPAASTLSRADREKAKAEEARRKESELLKGLRAELKKAQESQKEMKLLLDMYKSAPKEQRDKVQLMAAERKAKAEVDELRSRIRDLEERDRRESKKIADEDALRRIRQAEEQIEHLQRKLGATKQEEEALLSEMDVTGQAFEDMQEQNGRLLQQLREKDDANFKLMSERIKANQIHKLLREEKDELGEQVLGLKSQVDAQLLTVQKLEEKERALQGSLGGVEKELTLRSQALELNKRKAVEAAQLAEDLKVQLEHVQTRLREIQPCLAESRAAREKESFNLKRAQEDISRLRRKLEKQRKVEVYADADEILQEEIKEYKARLTCPCCNTRKKDAVLTKCFHVFCFECVRGRYEARQRKCPKCNAAFGAHDFHRVYIS.

The tract at residues 1 to 32 is disordered; it reads MSGLSNKRAAGDGGSGPPEKKLNREEKTTTTL. The span at 18–28 shows a compositional bias: basic and acidic residues; it reads PEKKLNREEKT. Lysine 20 is modified (N6-acetyllysine). The residue at position 42 (serine 42) is a Phosphoserine. A coiled-coil region spans residues 55–91; sequence KNKKLAERLEQRQACEDELRERIEKLEKRQATDDATL. Residues 120 to 148 are disordered; the sequence is SSGTEVPGCQEGLTRDVIPRTDPGTSDLR. Coiled coils occupy residues 190-378 and 438-526; these read KAAV…LRSL and LQKK…ASGS. N6-acetyllysine occurs at positions 356 and 518. 2 disordered regions span residues 520-562 and 579-652; these read RAQA…PDSK and KKEE…ESEL. Residues lysine 579 and lysine 580 each participate in a glycyl lysine isopeptide (Lys-Gly) (interchain with G-Cter in SUMO2) cross-link. Serine 585 and serine 586 each carry phosphoserine. 2 stretches are compositionally biased toward basic and acidic residues: residues 603–620 and 634–652; these read RGREPEARPKRELREREG and RADREKAKAEEARRKESEL. Residues 628 to 947 adopt a coiled-coil conformation; sequence AASTLSRADR…EEIKEYKARL (320 aa). An RING-type zinc finger spans residues 949–988; the sequence is CPCCNTRKKDAVLTKCFHVFCFECVRGRYEARQRKCPKCN.

Belongs to the BRE1 family. In terms of assembly, component of the RNF20/40 complex (also known as BRE1 complex) probably composed of 2 copies of RNF20/BRE1A and 2 copies of RNF40/BRE1B. Interacts with UBE2E1/UBCH6. Interacts with RB1 and WAC. May interact with STX1A. As to expression, ubiquitously expressed. Expressed in brain, testis, heart, liver and kidney. Weakly expressed in lung, spleen and skeletal muscle (at protein level).

The protein resides in the nucleus. The enzyme catalyses S-ubiquitinyl-[E2 ubiquitin-conjugating enzyme]-L-cysteine + [acceptor protein]-L-lysine = [E2 ubiquitin-conjugating enzyme]-L-cysteine + N(6)-ubiquitinyl-[acceptor protein]-L-lysine.. Its pathway is protein modification; protein ubiquitination. Its function is as follows. Component of the RNF20/40 E3 ubiquitin-protein ligase complex that mediates monoubiquitination of 'Lys-120' of histone H2B (H2BK120ub1). H2BK120ub1 gives a specific tag for epigenetic transcriptional activation and is also prerequisite for histone H3 'Lys-4' and 'Lys-79' methylation (H3K4me and H3K79me, respectively). It thereby plays a central role in histone code and gene regulation. The RNF20/40 complex forms a H2B ubiquitin ligase complex in cooperation with the E2 enzyme UBE2A or UBE2B; reports about the cooperation with UBE2E1/UBCH are contradictory. Required for transcriptional activation of Hox genes. The protein is E3 ubiquitin-protein ligase BRE1B (Rnf40) of Rattus norvegicus (Rat).